Here is a 101-residue protein sequence, read N- to C-terminus: Small ribosomal subunit protein uS14 (101 aa).

This sequence belongs to the universal ribosomal protein uS14 family. In terms of assembly, part of the 30S ribosomal subunit. Contacts proteins S3 and S10.

Functionally, binds 16S rRNA, required for the assembly of 30S particles and may also be responsible for determining the conformation of the 16S rRNA at the A site. This is Small ribosomal subunit protein uS14 from Polaromonas sp. (strain JS666 / ATCC BAA-500).